We begin with the raw amino-acid sequence, 229 residues long: Putative N-acetylmannosamine-6-phosphate 2-epimerase (229 aa).

It belongs to the NanE family.

The catalysed reaction is an N-acyl-D-glucosamine 6-phosphate = an N-acyl-D-mannosamine 6-phosphate. The protein operates within amino-sugar metabolism; N-acetylneuraminate degradation; D-fructose 6-phosphate from N-acetylneuraminate: step 3/5. Functionally, converts N-acetylmannosamine-6-phosphate (ManNAc-6-P) to N-acetylglucosamine-6-phosphate (GlcNAc-6-P). The protein is Putative N-acetylmannosamine-6-phosphate 2-epimerase of Escherichia coli O127:H6 (strain E2348/69 / EPEC).